We begin with the raw amino-acid sequence, 840 residues long: MAAAVAMRSGSGSDGGGGGYDKAGMDSGKYVRYTPEQVEALERVYAECPKPSSSRRQQLLRDCPILANIEPKQIKVWFQNRRCRDKQRKEASRLQAVNRKLTAMNKLLMEENERLQKQVSQLVHENAYMKQQLQNPSLGNDTSCESNVTTPQNPLRDASNPSGLLTIAEETLTEFLSKATGTAVDWVPMPGMKPGPDSFGIVAVSHGCRGVAARACGLVNLEPTKIVEILKDRPSWFRDCRSLEVFTMFPAGNGGTIELVYMQMYAPTTLVPARDFWTLRYTTTMEDGSLVVCERSLSGSGGGPSTASAQQFVRAEMLPSGYLVRPCEGGGSIVHIVDHLDLEAWSVPEVLRPLYESSRVVAQKMTTAALRHIRQIAQETSGEVVYALGRQPAVLRTFSQRLSRGFNDAISGFNDDGWSVMGGDGIEDVIIACNAKKVRNTSTSANAFVTPGGVICAKASMLLQSVPPAVLVRFLREHRSEWADYNFDAYSASSLKTSSCSLPGLRPMRFSGSQIIMPLAHTVENEEILEVVRLEGQALTHDDGLMSRDIHLLQLCTGIDEKSMGSCFQLVSAPIDELFPDDAPLISSGFRVIPLDMKTDGTPAGRTLDLASSLEVGSTAQPTGDASMDDCNLRSVLTIAFQFPYEMHLQDSVATMARQYVRSIVSSVQRVSMAISPSRSGLNAGQKIISGFPEAPTLARWICQSYQFHLGVELLRQADDAGEALLKMLWDYEDAILCCSFKEKPVFTFANEMGLNMLETSLVALQDLSLDKIFDEAGRKALYNEIPKLMEQGYVYLPGGVCLSGMGRHVSFEQAVAWKVLGEDNNVHCLAFCFVNWSFV.

2 disordered regions span residues 1–26 (MAAAVAMRSGSGSDGGGGGYDKAGMD) and 135–160 (NPSLGNDTSCESNVTTPQNPLRDASN). Positions 12 to 21 (GSDGGGGGYD) are enriched in gly residues. The homeobox DNA-binding region spans 26 to 89 (DSGKYVRYTP…NRRCRDKQRK (64 aa)). Residues 86–135 (KQRKEASRLQAVNRKLTAMNKLLMEENERLQKQVSQLVHENAYMKQQLQN) are a coiled coil. The region spanning 157-385 (DASNPSGLLT…IAQETSGEVV (229 aa)) is the START domain.

This sequence belongs to the HD-ZIP homeobox family. Class III subfamily. As to expression, expressed in seedlings, roots, stems, leaf sheaths and blades and panicles.

Its subcellular location is the nucleus. Its function is as follows. Probable transcription factor. The protein is Homeobox-leucine zipper protein HOX9 (HOX9) of Oryza sativa subsp. japonica (Rice).